A 367-amino-acid polypeptide reads, in one-letter code: NADH-quinone oxidoreductase subunit H (367 aa).

The next 8 helical transmembrane spans lie at Val18–Leu38, Leu87–Ile107, Ile132–Gly152, Leu180–Ala200, Met204–Leu224, Phe257–Phe277, Ile291–Trp311, and Gly328–Val348.

It belongs to the complex I subunit 1 family. In terms of assembly, NDH-1 is composed of 14 different subunits. Subunits NuoA, H, J, K, L, M, N constitute the membrane sector of the complex.

It localises to the cell inner membrane. It carries out the reaction a quinone + NADH + 5 H(+)(in) = a quinol + NAD(+) + 4 H(+)(out). In terms of biological role, NDH-1 shuttles electrons from NADH, via FMN and iron-sulfur (Fe-S) centers, to quinones in the respiratory chain. The immediate electron acceptor for the enzyme in this species is believed to be ubiquinone. Couples the redox reaction to proton translocation (for every two electrons transferred, four hydrogen ions are translocated across the cytoplasmic membrane), and thus conserves the redox energy in a proton gradient. This subunit may bind ubiquinone. The protein is NADH-quinone oxidoreductase subunit H of Ehrlichia ruminantium (strain Gardel).